The following is a 553-amino-acid chain: MDVSNTMLLVAVVAAYWLWFQRISRWLKGPRVWPVLGSLPGLIEQRDRMHDWITENLRACGGTYQTCICAVPFLAKKQGLVTVTCDPKNIEHMLKTRFDNYPKGPTWQAVFHDFLGQGIFNSDGDTWLFQRKTAALEFTTRTLRQAMGRWVNRGIKLRFCPILETAQNNYEPVDLQDLILRLTFDNICGLAFGKDTRTCAPGLPENGFASAFDRATEASLQRFILPEFLWRLKKWLGLGLEVSLSRSLGEIDGYLDAVINTRKQELLSQRESGVQRHDDLLSRFMKKKDQSYSETFLRHVALNFILAGRDTSSVALSWFFWLITTHPTVEDKIVREICSVLIETRGTDVSSWTAEPLEFDEVDRLVYLKAALSETLRLYPSVPEDSKHVVNDDILPDGTFVPAGSSVTYSIYAAGRMKSTWGEDCLEFKPERWISPDDGKFVNHDQYRFVAFNAGPRICLGKDLAYLQMKTIAAAVLLRHRLTVAPGHKVEQKMSLTLFMKNGLLVNVHKRDLEVMMKSLVPKERNDVVVLNGKCNGGIGEGVAVNAAVAVAV.

A helical membrane pass occupies residues 2–20 (DVSNTMLLVAVVAAYWLWF). Residue C459 coordinates heme.

The protein belongs to the cytochrome P450 family. Requires heme as cofactor. Expressed in leaves, stems, flowers and siliques. Expressed at low levels in roots. Expressed in guard cells of cotyledons and leaves.

The protein localises to the membrane. It catalyses the reaction an organic molecule + reduced [NADPH--hemoprotein reductase] + O2 = an alcohol + oxidized [NADPH--hemoprotein reductase] + H2O + H(+). Catalyzes the omega-hydroxylation of various fatty acids (FA). Acts on saturated and unsaturated fatty acids with chain lengths from C12 to C18. Plays a major role in the biosynthesis of extracellular lipids. Involved in the biosynthesis of hydroxylated fatty acids required for cutin biosynthesis, cuticle development and repression of bacterial type III gene expression. The chain is Cytochrome P450 86A2 (CYP86A2) from Arabidopsis thaliana (Mouse-ear cress).